The sequence spans 265 residues: tRNA pseudouridine synthase A (265 aa).

Asp58 serves as the catalytic Nucleophile. Tyr116 contacts substrate.

This sequence belongs to the tRNA pseudouridine synthase TruA family. As to quaternary structure, homodimer.

It carries out the reaction uridine(38/39/40) in tRNA = pseudouridine(38/39/40) in tRNA. Formation of pseudouridine at positions 38, 39 and 40 in the anticodon stem and loop of transfer RNAs. The protein is tRNA pseudouridine synthase A of Neisseria meningitidis serogroup B (strain ATCC BAA-335 / MC58).